A 1131-amino-acid polypeptide reads, in one-letter code: DNA-directed RNA polymerase subunit beta (1131 aa).

The tract at residues 1108-1131 is disordered; that stretch reads QLARRTPPRPTYESLSRESLDDDE. Residues 1122–1131 are compositionally biased toward basic and acidic residues; it reads LSRESLDDDE.

This sequence belongs to the RNA polymerase beta chain family. As to quaternary structure, in cyanobacteria the RNAP catalytic core is composed of 2 alpha, 1 beta, 1 beta', 1 gamma and 1 omega subunit. When a sigma factor is associated with the core the holoenzyme is formed, which can initiate transcription.

It catalyses the reaction RNA(n) + a ribonucleoside 5'-triphosphate = RNA(n+1) + diphosphate. Functionally, DNA-dependent RNA polymerase catalyzes the transcription of DNA into RNA using the four ribonucleoside triphosphates as substrates. The sequence is that of DNA-directed RNA polymerase subunit beta from Nostoc sp. (strain PCC 7120 / SAG 25.82 / UTEX 2576).